Here is a 312-residue protein sequence, read N- to C-terminus: Olfactory receptor 867 (312 aa).

Over 1-6 (MILNCN) the chain is Extracellular. The helical transmembrane segment at 7 to 30 (PFSGLFLSMYLVTVLGNLLIILAV) threads the bilayer. Topologically, residues 31 to 38 (SSNSHLHN) are cytoplasmic. The helical transmembrane segment at 39-60 (LMYFFLSNLSFVDICFISTTIP) threads the bilayer. Residues 61 to 81 (KMLVNIHSQTKDISYIECLSQ) lie on the Extracellular side of the membrane. The cysteines at positions 78 and 160 are disulfide-linked. A helical membrane pass occupies residues 82-101 (VYFLTTFGGMDNFLLTLMAC). Over 102–120 (DRYVAICHPLNYTVIMNLQ) the chain is Cytoplasmic. Residues 121 to 139 (LCALLILMFWLIMFCVSLI) form a helical membrane-spanning segment. Residues 140–177 (HVLLMNELNFSRGTEIPHFFCELAQVLKVANSDTHINN) are Extracellular-facing. An N-linked (GlcNAc...) asparagine glycan is attached at N148. The helical transmembrane segment at 178–200 (VFMYVVTSLLGLIPMTGILMSYS) threads the bilayer. At 201-217 (QIASSLLKMSSSVSKYK) the chain is on the cytoplasmic side. Residues 218 to 241 (AFSTCGSHLCVVSLFYGSATIVYF) traverse the membrane as a helical segment. Topologically, residues 242-253 (CSSVLHSTHKKM) are extracellular. The helical transmembrane segment at 254–273 (IASLMYTVISPMLNPFIYSL) threads the bilayer. Over 274–312 (RNKDVKGALGKLFIRVASCPLWSKDFRPKFILKPERQSL) the chain is Cytoplasmic.

Belongs to the G-protein coupled receptor 1 family. Epithelium of the tongue; including the taste buds.

Its subcellular location is the cell membrane. Functionally, possible olfactory or taste receptor. The polypeptide is Olfactory receptor 867 (Olr867) (Rattus norvegicus (Rat)).